A 38-amino-acid chain; its full sequence is Photosystem II reaction center protein L (38 aa).

The chain crosses the membrane as a helical span at residues 17–37 (SLYWGLLLIFVLAILFSNYFF).

It belongs to the PsbL family. As to quaternary structure, PSII is composed of 1 copy each of membrane proteins PsbA, PsbB, PsbC, PsbD, PsbE, PsbF, PsbH, PsbI, PsbJ, PsbK, PsbL, PsbM, PsbT, PsbX, PsbY, PsbZ, Psb30/Ycf12, at least 3 peripheral proteins of the oxygen-evolving complex and a large number of cofactors. It forms dimeric complexes.

The protein localises to the plastid. It localises to the chloroplast thylakoid membrane. Functionally, one of the components of the core complex of photosystem II (PSII). PSII is a light-driven water:plastoquinone oxidoreductase that uses light energy to abstract electrons from H(2)O, generating O(2) and a proton gradient subsequently used for ATP formation. It consists of a core antenna complex that captures photons, and an electron transfer chain that converts photonic excitation into a charge separation. This subunit is found at the monomer-monomer interface and is required for correct PSII assembly and/or dimerization. The polypeptide is Photosystem II reaction center protein L (Aethionema cordifolium (Lebanon stonecress)).